A 244-amino-acid polypeptide reads, in one-letter code: NAD-dependent protein deacetylase (244 aa).

One can recognise a Deacetylase sirtuin-type domain in the interval 1–244 (MTGEQLAHWI…LSAVQRAVMP (244 aa)). NAD(+) contacts are provided by Ala-22, Thr-26, Phe-33, Arg-34, Gln-103, Ile-105, Asp-106, and His-121. Residue Phe-33 participates in nicotinamide binding. Nicotinamide contacts are provided by Ile-105 and Asp-106. His-121 (proton acceptor) is an active-site residue. Zn(2+) is bound by residues Cys-129, Cys-132, Cys-150, and Cys-152. Positions 190, 191, 213, and 231 each coordinate NAD(+).

It belongs to the sirtuin family. Class U subfamily. Requires Zn(2+) as cofactor.

The protein localises to the cytoplasm. The catalysed reaction is N(6)-acetyl-L-lysyl-[protein] + NAD(+) + H2O = 2''-O-acetyl-ADP-D-ribose + nicotinamide + L-lysyl-[protein]. NAD-dependent protein deacetylase which modulates the activities of several enzymes which are inactive in their acetylated form. The chain is NAD-dependent protein deacetylase from Cutibacterium acnes (strain DSM 16379 / KPA171202) (Propionibacterium acnes).